A 513-amino-acid polypeptide reads, in one-letter code: ATP synthase subunit alpha (513 aa).

Position 169 to 176 (169 to 176 (GDRQTGKT)) interacts with ATP.

The protein belongs to the ATPase alpha/beta chains family. F-type ATPases have 2 components, CF(1) - the catalytic core - and CF(0) - the membrane proton channel. CF(1) has five subunits: alpha(3), beta(3), gamma(1), delta(1), epsilon(1). CF(0) has three main subunits: a(1), b(2) and c(9-12). The alpha and beta chains form an alternating ring which encloses part of the gamma chain. CF(1) is attached to CF(0) by a central stalk formed by the gamma and epsilon chains, while a peripheral stalk is formed by the delta and b chains.

It localises to the cell membrane. The enzyme catalyses ATP + H2O + 4 H(+)(in) = ADP + phosphate + 5 H(+)(out). In terms of biological role, produces ATP from ADP in the presence of a proton gradient across the membrane. The alpha chain is a regulatory subunit. This Polynucleobacter asymbioticus (strain DSM 18221 / CIP 109841 / QLW-P1DMWA-1) (Polynucleobacter necessarius subsp. asymbioticus) protein is ATP synthase subunit alpha.